The following is a 193-amino-acid chain: NADH-quinone oxidoreductase subunit B (193 aa).

[4Fe-4S] cluster is bound by residues C72, C73, C137, and C167.

Belongs to the complex I 20 kDa subunit family. In terms of assembly, NDH-1 is composed of 14 different subunits. Subunits NuoB, C, D, E, F, and G constitute the peripheral sector of the complex. [4Fe-4S] cluster serves as cofactor.

The protein localises to the cell inner membrane. The enzyme catalyses a quinone + NADH + 5 H(+)(in) = a quinol + NAD(+) + 4 H(+)(out). NDH-1 shuttles electrons from NADH, via FMN and iron-sulfur (Fe-S) centers, to quinones in the respiratory chain. The immediate electron acceptor for the enzyme in this species is believed to be ubiquinone. Couples the redox reaction to proton translocation (for every two electrons transferred, four hydrogen ions are translocated across the cytoplasmic membrane), and thus conserves the redox energy in a proton gradient. The sequence is that of NADH-quinone oxidoreductase subunit B from Caulobacter vibrioides (strain ATCC 19089 / CIP 103742 / CB 15) (Caulobacter crescentus).